The following is a 313-amino-acid chain: Protein FixB (313 aa).

255 to 283 (LYLAVGISGQIQHMVGANASQTIFAINKD) contacts FAD.

Belongs to the ETF alpha-subunit/FixB family. As to quaternary structure, heterodimer of FixA and FixB.

The protein operates within amine and polyamine metabolism; carnitine metabolism. Its function is as follows. Required for anaerobic carnitine reduction. May bring reductant to CaiA. This is Protein FixB from Escherichia coli O8 (strain IAI1).